The following is a 205-amino-acid chain: Non-specific lipid transfer protein GPI-anchored 13 (205 aa).

The N-terminal stretch at 1–24 is a signal peptide; the sequence is MESRKIKVMATAIALIMVAMVVDA. 4 disulfide bridges follow: Cys-36/Cys-77, Cys-46/Cys-61, Cys-62/Cys-104, and Cys-75/Cys-113. Residues Asn-93, Asn-137, and Asn-165 are each glycosylated (N-linked (GlcNAc...) asparagine). The tract at residues 141–176 is disordered; sequence SASAPTGSASEPTSMSSTPGSSAGNNSGRTTSVPGT. Residue Asn-177 is the site of GPI-anchor amidated asparagine attachment. Positions 178 to 205 are cleaved as a propeptide — removed in mature form; it reads HAQSFSKQWLGLEVVAHFFVIFYIFILV.

Belongs to the plant LTP family. Expressed preferentially in expanding leaves and sepals, restricted to the distal side. Expressed at low levels in roots and stems.

It localises to the cell membrane. In terms of biological role, probable lipid transfer protein. This Arabidopsis thaliana (Mouse-ear cress) protein is Non-specific lipid transfer protein GPI-anchored 13.